The following is a 447-amino-acid chain: Phosphoglucosamine mutase (447 aa).

The active-site Phosphoserine intermediate is the S101. 4 residues coordinate Mg(2+): S101, D242, D244, and D246. Position 101 is a phosphoserine (S101).

Belongs to the phosphohexose mutase family. Requires Mg(2+) as cofactor. Post-translationally, activated by phosphorylation.

The catalysed reaction is alpha-D-glucosamine 1-phosphate = D-glucosamine 6-phosphate. Functionally, catalyzes the conversion of glucosamine-6-phosphate to glucosamine-1-phosphate. This Methylobacterium radiotolerans (strain ATCC 27329 / DSM 1819 / JCM 2831 / NBRC 15690 / NCIMB 10815 / 0-1) protein is Phosphoglucosamine mutase.